The primary structure comprises 479 residues: Glycogen synthase (479 aa).

An ADP-alpha-D-glucose-binding site is contributed by Lys15.

This sequence belongs to the glycosyltransferase 1 family. Bacterial/plant glycogen synthase subfamily.

The catalysed reaction is [(1-&gt;4)-alpha-D-glucosyl](n) + ADP-alpha-D-glucose = [(1-&gt;4)-alpha-D-glucosyl](n+1) + ADP + H(+). Its pathway is glycan biosynthesis; glycogen biosynthesis. In terms of biological role, synthesizes alpha-1,4-glucan chains using ADP-glucose. The protein is Glycogen synthase of Clostridium beijerinckii (strain ATCC 51743 / NCIMB 8052) (Clostridium acetobutylicum).